The sequence spans 365 residues: Probable UDP-arabinopyranose mutase 1 (365 aa).

A DXD motif motif is present at residues 100 to 102 (DDD). R148 carries N-linked (Glc...) arginine glycosylation.

It belongs to the RGP family. In terms of assembly, homopentamer or homohexamer. It depends on Mn(2+) as a cofactor. Requires Mg(2+) as cofactor. Reversibly glycosylated by UDP-glucose, UDP-xylose and UDP-galactose, but not UDP-mannose. As to expression, expressed in all tissues tested, including root, tuber, leaf, petiole, shoot, stolon and stem.

The protein localises to the secreted. It is found in the cell wall. It localises to the cell junction. Its subcellular location is the plasmodesma. The protein resides in the golgi apparatus. The catalysed reaction is UDP-beta-L-arabinofuranose = UDP-beta-L-arabinopyranose. In terms of biological role, probable UDP-L-arabinose mutase involved in the biosynthesis of cell wall non-cellulosic polysaccharides. Was initially shown to possess an autoglycosylating activity which is dependent on the presence of UDP-glucose and manganese. The protein is Probable UDP-arabinopyranose mutase 1 of Solanum tuberosum (Potato).